A 389-amino-acid polypeptide reads, in one-letter code: tRNA-specific 2-thiouridylase MnmA (389 aa).

ATP contacts are provided by residues 35 to 42 (GMSGGVDS) and Met-61. The interval 121–123 (NPD) is interaction with target base in tRNA. The active-site Nucleophile is Cys-126. Cys-126 and Cys-223 are disulfide-bonded. Gly-151 contacts ATP. The tract at residues 173 to 175 (KDQ) is interaction with tRNA. Cys-223 acts as the Cysteine persulfide intermediate in catalysis. An interaction with tRNA region spans residues 335 to 336 (RY).

It belongs to the MnmA/TRMU family.

It localises to the cytoplasm. The enzyme catalyses S-sulfanyl-L-cysteinyl-[protein] + uridine(34) in tRNA + AH2 + ATP = 2-thiouridine(34) in tRNA + L-cysteinyl-[protein] + A + AMP + diphosphate + H(+). In terms of biological role, catalyzes the 2-thiolation of uridine at the wobble position (U34) of tRNA, leading to the formation of s(2)U34. The polypeptide is tRNA-specific 2-thiouridylase MnmA (Actinobacillus succinogenes (strain ATCC 55618 / DSM 22257 / CCUG 43843 / 130Z)).